The chain runs to 215 residues: Pyridoxine/pyridoxamine 5'-phosphate oxidase (215 aa).

Residues 9 to 12 (RRDY) and K69 contribute to the substrate site. Residues 64–69 (RVLLLK), 79–80 (FS), K86, and Q108 contribute to the FMN site. Residues Y126, R130, and S134 each contribute to the substrate site. Residues 143–144 (QS) and W188 each bind FMN. 194-196 (RLH) contributes to the substrate binding site. Position 198 (R198) interacts with FMN.

It belongs to the pyridoxamine 5'-phosphate oxidase family. Homodimer. FMN serves as cofactor.

The enzyme catalyses pyridoxamine 5'-phosphate + O2 + H2O = pyridoxal 5'-phosphate + H2O2 + NH4(+). It carries out the reaction pyridoxine 5'-phosphate + O2 = pyridoxal 5'-phosphate + H2O2. It functions in the pathway cofactor metabolism; pyridoxal 5'-phosphate salvage; pyridoxal 5'-phosphate from pyridoxamine 5'-phosphate: step 1/1. Its pathway is cofactor metabolism; pyridoxal 5'-phosphate salvage; pyridoxal 5'-phosphate from pyridoxine 5'-phosphate: step 1/1. Catalyzes the oxidation of either pyridoxine 5'-phosphate (PNP) or pyridoxamine 5'-phosphate (PMP) into pyridoxal 5'-phosphate (PLP). The chain is Pyridoxine/pyridoxamine 5'-phosphate oxidase from Ectopseudomonas mendocina (strain ymp) (Pseudomonas mendocina).